The sequence spans 520 residues: Ribonuclease Y (520 aa).

A helical transmembrane segment spans residues 5 to 25 (ITIISSLLFLIVGLVVGSLIF). A disordered region spans residues 70-127 (RTEIENELRGRRTETQKAENRLLQREENLDRKDTSLSKREATLERKEESISKRQQQIE). Residues 210–273 (TVSVVTLPND…EIARIALEKL (64 aa)) form the KH domain. Positions 336–429 (VLNHSLEVSK…VAAADALSAA (94 aa)) constitute an HD domain.

Belongs to the RNase Y family.

It is found in the cell membrane. Functionally, endoribonuclease that initiates mRNA decay. This Listeria welshimeri serovar 6b (strain ATCC 35897 / DSM 20650 / CCUG 15529 / CIP 8149 / NCTC 11857 / SLCC 5334 / V8) protein is Ribonuclease Y.